Here is a 157-residue protein sequence, read N- to C-terminus: UPF0225 protein PSPPH_1399 (157 aa).

This sequence belongs to the UPF0225 family.

The chain is UPF0225 protein PSPPH_1399 from Pseudomonas savastanoi pv. phaseolicola (strain 1448A / Race 6) (Pseudomonas syringae pv. phaseolicola (strain 1448A / Race 6)).